Consider the following 394-residue polypeptide: 8-amino-7-oxononanoate synthase (394 aa).

R21 is a binding site for substrate. 112–113 (GY) contacts pyridoxal 5'-phosphate. H137 contributes to the substrate binding site. 3 residues coordinate pyridoxal 5'-phosphate: S183, H211, and T239. K242 carries the post-translational modification N6-(pyridoxal phosphate)lysine. A substrate-binding site is contributed by T358.

The protein belongs to the class-II pyridoxal-phosphate-dependent aminotransferase family. BioF subfamily. In terms of assembly, homodimer. Pyridoxal 5'-phosphate is required as a cofactor.

The enzyme catalyses 6-carboxyhexanoyl-[ACP] + L-alanine + H(+) = (8S)-8-amino-7-oxononanoate + holo-[ACP] + CO2. Its pathway is cofactor biosynthesis; biotin biosynthesis. Catalyzes the decarboxylative condensation of pimeloyl-[acyl-carrier protein] and L-alanine to produce 8-amino-7-oxononanoate (AON), [acyl-carrier protein], and carbon dioxide. In Burkholderia pseudomallei (strain 1710b), this protein is 8-amino-7-oxononanoate synthase.